A 412-amino-acid polypeptide reads, in one-letter code: Gamma-glutamyl phosphate reductase (412 aa).

The protein belongs to the gamma-glutamyl phosphate reductase family.

Its subcellular location is the cytoplasm. The catalysed reaction is L-glutamate 5-semialdehyde + phosphate + NADP(+) = L-glutamyl 5-phosphate + NADPH + H(+). Its pathway is amino-acid biosynthesis; L-proline biosynthesis; L-glutamate 5-semialdehyde from L-glutamate: step 2/2. In terms of biological role, catalyzes the NADPH-dependent reduction of L-glutamate 5-phosphate into L-glutamate 5-semialdehyde and phosphate. The product spontaneously undergoes cyclization to form 1-pyrroline-5-carboxylate. In Lactiplantibacillus plantarum (strain ATCC BAA-793 / NCIMB 8826 / WCFS1) (Lactobacillus plantarum), this protein is Gamma-glutamyl phosphate reductase.